A 298-amino-acid chain; its full sequence is Bifunctional protein FolD (298 aa).

NADP(+) is bound by residues 165-167 (GRS), Ser190, and Ile231.

This sequence belongs to the tetrahydrofolate dehydrogenase/cyclohydrolase family. Homodimer.

The catalysed reaction is (6R)-5,10-methylene-5,6,7,8-tetrahydrofolate + NADP(+) = (6R)-5,10-methenyltetrahydrofolate + NADPH. The enzyme catalyses (6R)-5,10-methenyltetrahydrofolate + H2O = (6R)-10-formyltetrahydrofolate + H(+). It participates in one-carbon metabolism; tetrahydrofolate interconversion. Catalyzes the oxidation of 5,10-methylenetetrahydrofolate to 5,10-methenyltetrahydrofolate and then the hydrolysis of 5,10-methenyltetrahydrofolate to 10-formyltetrahydrofolate. This chain is Bifunctional protein FolD, found in Prochlorococcus marinus subsp. pastoris (strain CCMP1986 / NIES-2087 / MED4).